A 43-amino-acid chain; its full sequence is Protein PsbN (43 aa).

A helical membrane pass occupies residues 7–27; that stretch reads LVVAIAAITICITAFAIYTAF.

Belongs to the PsbN family.

It is found in the cellular thylakoid membrane. May play a role in photosystem I and II biogenesis. The sequence is that of Protein PsbN from Synechococcus sp. (strain JA-3-3Ab) (Cyanobacteria bacterium Yellowstone A-Prime).